The following is a 1088-amino-acid chain: Methionine S-methyltransferase (1088 aa).

The protein belongs to the class I-like SAM-binding methyltransferase superfamily. Homotetramer.

The protein resides in the cytoplasm. It catalyses the reaction L-methionine + S-adenosyl-L-methionine = S-methyl-L-methionine + S-adenosyl-L-homocysteine. Catalyzes the S-methylmethionine (SMM) biosynthesis from adenosyl-L-homocysteine (AdoMet) and methionine. SMM biosynthesis (by MMT1) and degradation (by HMT-1, HMT-2 and HMT-3) constitute the SMM cycle in plants, which is probably required to achieve short term control of AdoMet level. Also able to catalyze the selenium-methylmethionine (SeMM) from AdoMet and selenium-methionine (SeMet). May play a role in phoem sulfur transport; such function is however not essential. The polypeptide is Methionine S-methyltransferase (MMT1) (Wollastonia biflora (Beach sunflower)).